A 236-amino-acid polypeptide reads, in one-letter code: Acetate--CoA ligase [ADP-forming] II subunit beta (236 aa).

One can recognise an ATP-grasp domain in the interval 26-62 (KQVLKAYGLPVPEEKLAKTLDEALKYAEEIGYPVAMK). Residue 52–63 (AEEIGYPVAMKL) participates in ATP binding.

Belongs to the acetate CoA ligase beta subunit family. As to quaternary structure, heterotetramer of two alpha and two beta subunits.

It carries out the reaction acetate + ATP + CoA = acetyl-CoA + ADP + phosphate. Catalyzes the reversible formation of acetate and ATP from acetyl-CoA by using ADP and phosphate. Can use other substrates such as phenylacetyl-CoA, indoleacetyl-CoA and isobutyryl-CoA, but not succinyl-CoA. Seems to be involved primarily in the degradation of aryl-CoA esters to the corresponding acids. Participates in the conversion of acetyl-CoA to acetate and in the degradation of branched-chain amino acids via branched-chain-acyl-CoA esters. The sequence is that of Acetate--CoA ligase [ADP-forming] II subunit beta from Pyrococcus furiosus (strain ATCC 43587 / DSM 3638 / JCM 8422 / Vc1).